The sequence spans 239 residues: MLRRLSPIQPDSFEFTPANLEWARAQMTKYPEGRQQSAIIPVLWRAQEQEGWLSRPAIEYCADLLGMPYIRALEVATFYFMFQLQPVGSVAHIQICGTTTCMICGAEDLIRVCKEKIAPEPHALSADGRFSWEEVECLGACTNAPMAQIGKDFYEDLTVEKLAALIDRFAAGEVPVPGPQNGRFSAEALGGPTALADLKGGEAHNASVARALRLGDSIKRIDGTEVPITTPWLATQNGV.

Residues Cys-96, Cys-101, Cys-137, and Cys-141 each coordinate [2Fe-2S] cluster.

This sequence belongs to the complex I 24 kDa subunit family. NDH-1 is composed of at least 14 different subunits, Nqo1 to Nqo14. The complex has a L-shaped structure, with the hydrophobic arm (subunits Nqo7, Nqo8, Nqo10 to Nqo14) embedded in the inner membrane and the hydrophilic peripheral arm (subunits Nqo1 to Nqo6, Nqo9) protruding into the bacterial cytoplasm. The hydrophilic domain contains all the redox centers. Requires [2Fe-2S] cluster as cofactor.

It localises to the cell inner membrane. It carries out the reaction a quinone + NADH + 5 H(+)(in) = a quinol + NAD(+) + 4 H(+)(out). Functionally, NDH-1 shuttles electrons from NADH, via FMN and iron-sulfur (Fe-S) centers, to quinones in the respiratory chain. The immediate electron acceptor for the enzyme in this species is believed to be ubiquinone. Couples the redox reaction to proton translocation (for every two electrons transferred, four hydrogen ions are translocated across the cytoplasmic membrane), and thus conserves the redox energy in a proton gradient. In Paracoccus denitrificans, this protein is NADH-quinone oxidoreductase chain 2 (nqo2).